The primary structure comprises 153 residues: SsrA-binding protein (153 aa).

The protein belongs to the SmpB family.

The protein localises to the cytoplasm. Functionally, required for rescue of stalled ribosomes mediated by trans-translation. Binds to transfer-messenger RNA (tmRNA), required for stable association of tmRNA with ribosomes. tmRNA and SmpB together mimic tRNA shape, replacing the anticodon stem-loop with SmpB. tmRNA is encoded by the ssrA gene; the 2 termini fold to resemble tRNA(Ala) and it encodes a 'tag peptide', a short internal open reading frame. During trans-translation Ala-aminoacylated tmRNA acts like a tRNA, entering the A-site of stalled ribosomes, displacing the stalled mRNA. The ribosome then switches to translate the ORF on the tmRNA; the nascent peptide is terminated with the 'tag peptide' encoded by the tmRNA and targeted for degradation. The ribosome is freed to recommence translation, which seems to be the essential function of trans-translation. The chain is SsrA-binding protein from Pelotomaculum thermopropionicum (strain DSM 13744 / JCM 10971 / SI).